We begin with the raw amino-acid sequence, 352 residues long: Peptide chain release factor 1 (352 aa).

Gln-233 carries the post-translational modification N5-methylglutamine. The disordered stretch occupies residues 288–309 (NAKDRKEQVGSGDRSERIRTYN). Residues 289–306 (AKDRKEQVGSGDRSERIR) show a composition bias toward basic and acidic residues.

It belongs to the prokaryotic/mitochondrial release factor family. Methylated by PrmC. Methylation increases the termination efficiency of RF1.

The protein resides in the cytoplasm. In terms of biological role, peptide chain release factor 1 directs the termination of translation in response to the peptide chain termination codons UAG and UAA. The sequence is that of Peptide chain release factor 1 from Helicobacter pylori (strain G27).